Consider the following 527-residue polypeptide: uncharacterized protein (527 aa).

Residues 1 to 93 (MSYMIAVPDM…AGAYASAEAT (93 aa)) enclose the PE domain. 3 stretches are compositionally biased toward gly residues: residues 264 to 286 (IHGH…GVQG), 292 to 384 (GAAG…AGNG), and 472 to 515 (NGGD…GGSR). Disordered stretches follow at residues 264 to 384 (IHGH…AGNG) and 472 to 527 (NGGD…TPGQ).

The protein belongs to the mycobacterial PE family. PGRS subfamily.

This is an uncharacterized protein from Mycobacterium tuberculosis (strain CDC 1551 / Oshkosh).